A 474-amino-acid polypeptide reads, in one-letter code: Catalase (474 aa).

Residues H52 and N124 contribute to the active site. Y334 provides a ligand contact to heme.

This sequence belongs to the catalase family. The cofactor is heme.

The enzyme catalyses 2 H2O2 = O2 + 2 H2O. Functionally, decomposes hydrogen peroxide into water and oxygen; serves to protect cells from the toxic effects of hydrogen peroxide. The polypeptide is Catalase (katA) (Campylobacter jejuni subsp. jejuni serotype O:2 (strain ATCC 700819 / NCTC 11168)).